Reading from the N-terminus, the 495-residue chain is DUF21 domain-containing protein At4g14230 (495 aa).

Over methionine 1–cysteine 42 the chain is Extracellular. Residues glycine 30–glutamate 212 enclose the CNNM transmembrane domain. The helical transmembrane segment at phenylalanine 43–leucine 63 threads the bilayer. At valine 64–histidine 92 the chain is on the cytoplasmic side. Residues glutamine 93–leucine 113 form a helical membrane-spanning segment. The Extracellular portion of the chain corresponds to aspartate 114 to tyrosine 120. A helical membrane pass occupies residues valine 121–isoleucine 141. Residues cysteine 142–glycine 146 lie on the Cytoplasmic side of the membrane. Residues leucine 147–isoleucine 167 form a helical membrane-spanning segment. Topologically, residues serine 168–asparagine 495 are extracellular. 3 CBS domains span residues methionine 231–leucine 291, glycine 296–glutamate 356, and leucine 357–glutamate 426. The tract at residues lysine 330–asparagine 354 is disordered. Asparagine 349 carries N-linked (GlcNAc...) asparagine glycosylation. Serine 352 carries the post-translational modification Phosphoserine. N-linked (GlcNAc...) asparagine glycosylation occurs at asparagine 353. Residues serine 455–asparagine 495 are disordered. Residues glycine 456–proline 477 show a composition bias toward low complexity.

It is found in the membrane. The polypeptide is DUF21 domain-containing protein At4g14230 (CBSDUF2) (Arabidopsis thaliana (Mouse-ear cress)).